Here is a 253-residue protein sequence, read N- to C-terminus: Malonyl-[acyl-carrier protein] O-methyltransferase (253 aa).

Belongs to the methyltransferase superfamily.

The catalysed reaction is malonyl-[ACP] + S-adenosyl-L-methionine = malonyl-[ACP] methyl ester + S-adenosyl-L-homocysteine. The protein operates within cofactor biosynthesis; biotin biosynthesis. Converts the free carboxyl group of a malonyl-thioester to its methyl ester by transfer of a methyl group from S-adenosyl-L-methionine (SAM). It allows to synthesize pimeloyl-ACP via the fatty acid synthetic pathway. The polypeptide is Malonyl-[acyl-carrier protein] O-methyltransferase (Pectobacterium atrosepticum (strain SCRI 1043 / ATCC BAA-672) (Erwinia carotovora subsp. atroseptica)).